The following is a 1169-amino-acid chain: Zinc finger protein 862 (1169 aa).

The 67-residue stretch at 11–77 (VTFDDITVYL…SVQGQRSLLE (67 aa)) folds into the KRAB 1 domain. Residues 135 to 218 (KPRSIQKSWF…RDPIWAARFR (84 aa)) form a TTF-type 1 zinc finger. The KRAB 2 domain occupies 333–404 (VVFEDVAVYF…DPNGPKWGKG (72 aa)). A TTF-type 2 zinc finger spans residues 461–544 (RPRSIQRSWF…KEDTPHTALV (84 aa)).

The protein resides in the nucleus. May be involved in transcriptional regulation. This Homo sapiens (Human) protein is Zinc finger protein 862 (ZNF862).